The chain runs to 24 residues: Retinol-binding protein 3 (24 aa).

It localises to the secreted. It is found in the extracellular space. The protein localises to the extracellular matrix. Its subcellular location is the interphotoreceptor matrix. Its function is as follows. IRBP shuttles 11-cis and all trans retinoids between the retinol isomerase in the pigment epithelium and the visual pigments in the photoreceptor cells of the retina. This chain is Retinol-binding protein 3 (RBP3), found in Ovis aries (Sheep).